The sequence spans 459 residues: Cysteine--tRNA ligase (459 aa).

C31 contacts Zn(2+). The 'HIGH' region motif lies at 33-43 (PTVYYNPHIGN). Residues C216, H241, and E245 each coordinate Zn(2+). A 'KMSKS' region motif is present at residues 274–278 (KMSKS). Residue K277 coordinates ATP.

The protein belongs to the class-I aminoacyl-tRNA synthetase family. In terms of assembly, monomer. Zn(2+) is required as a cofactor.

It localises to the cytoplasm. It catalyses the reaction tRNA(Cys) + L-cysteine + ATP = L-cysteinyl-tRNA(Cys) + AMP + diphosphate. This is Cysteine--tRNA ligase from Rickettsia peacockii (strain Rustic).